The primary structure comprises 618 residues: UvrABC system protein C (618 aa).

The 80-residue stretch at 13-92 folds into the GIY-YIG domain; it reads DKPGVYLMKN…IKKYRPKYNI (80 aa). One can recognise a UVR domain in the interval 204–239; sequence LDIVENFKLNMEKAAENLEFEKAAMLRDKINIIEKI.

Belongs to the UvrC family. In terms of assembly, interacts with UvrB in an incision complex.

The protein localises to the cytoplasm. Its function is as follows. The UvrABC repair system catalyzes the recognition and processing of DNA lesions. UvrC both incises the 5' and 3' sides of the lesion. The N-terminal half is responsible for the 3' incision and the C-terminal half is responsible for the 5' incision. The protein is UvrABC system protein C of Clostridium botulinum (strain Okra / Type B1).